The following is a 492-amino-acid chain: Nuclear hormone receptor family member nhr-4 (492 aa).

The nuclear receptor DNA-binding region spans 47–122; that stretch reads RLICDVCGDV…VGMNPDSVQN (76 aa). 2 consecutive NR C4-type zinc fingers follow at residues 50-70 and 86-110; these read CDVC…CNGC and CRFG…LKKC. The segment at 121–143 is disordered; sequence QNERDRNAKNGGMGGPMSSPTQS. In terms of domain architecture, NR LBD spans 215–481; that stretch reads MDFSIHSAVL…ELIQATHKTT (267 aa).

Belongs to the nuclear hormone receptor family.

The protein localises to the nucleus. In terms of biological role, orphan nuclear receptor. This chain is Nuclear hormone receptor family member nhr-4 (nhr-4), found in Caenorhabditis elegans.